We begin with the raw amino-acid sequence, 1616 residues long: Vitellogenin-1 (1616 aa).

The N-terminal stretch at 1–19 is a signal peptide; the sequence is MRSIIIASIVALAIAFSPA. Positions 24 to 689 constitute a Vitellogenin domain; the sequence is FEPKIDYHYK…EKNSFLLKDL (666 aa). The N-linked (GlcNAc...) asparagine glycan is linked to Asn1270. The VWFD domain maps to 1310 to 1479; the sequence is SVCKVQKNQI…SYLLKNEECE (170 aa). Cystine bridges form between Cys1312–Cys1442 and Cys1334–Cys1478. Over residues 1505-1514 the composition is skewed to acidic residues; the sequence is SFEETYDYEQ. The segment at 1505 to 1531 is disordered; that stretch reads SFEETYDYEQENTNKKQKNQRSQKKSD.

Expressed in the intestine of adult hermaphrodites.

The protein resides in the secreted. Functionally, precursor of the egg-yolk proteins that are sources of nutrients during embryonic development. Together with other vitellogenins, may play a role in modulating life-span, acting via induction of autophagy and lysosomal lipolysis. This is Vitellogenin-1 (vit-1) from Caenorhabditis elegans.